The chain runs to 364 residues: Ferrochelatase (364 aa).

The Fe cation site is built by His-211 and Glu-292.

The protein belongs to the ferrochelatase family.

It localises to the cytoplasm. It carries out the reaction heme b + 2 H(+) = protoporphyrin IX + Fe(2+). It participates in porphyrin-containing compound metabolism; protoheme biosynthesis; protoheme from protoporphyrin-IX: step 1/1. Catalyzes the ferrous insertion into protoporphyrin IX. This is Ferrochelatase from Nitrosomonas europaea (strain ATCC 19718 / CIP 103999 / KCTC 2705 / NBRC 14298).